The sequence spans 674 residues: Protein tesmin/TSO1-like CXC 2 (674 aa).

Polar residues-rich tracts occupy residues 1-16 (MDTP…TPIS) and 76-89 (THNS…NSVE). Disordered regions lie at residues 1 to 20 (MDTP…KSRF) and 69 to 113 (KESR…GLNI). Over residues 95-109 (STSHEEVPAEGEDTK) the composition is skewed to basic and acidic residues. A CRC domain is found at 373 to 498 (SCKRCNCKKS…RCEGCKNAFG (126 aa)). Disordered regions lie at residues 504-529 (SIDM…SQQN) and 623-655 (IPNI…RRNG). A compositionally biased stretch (acidic residues) spans 507-516 (MEAEQEEENE).

The protein belongs to the lin-54 family. In terms of tissue distribution, ubiquitous but expressed mostly in all the aerial organs with highest expression in flowers.

The protein localises to the nucleus. Its function is as follows. Plays a role in development of both male and female reproductive tissues. The polypeptide is Protein tesmin/TSO1-like CXC 2 (TCX2) (Arabidopsis thaliana (Mouse-ear cress)).